Reading from the N-terminus, the 415-residue chain is Phosphopentomutase (415 aa).

The Mn(2+) site is built by Asp10, Asp313, His318, Asp354, His355, and His366.

It belongs to the phosphopentomutase family. The cofactor is Mn(2+).

The protein resides in the cytoplasm. It carries out the reaction 2-deoxy-alpha-D-ribose 1-phosphate = 2-deoxy-D-ribose 5-phosphate. The catalysed reaction is alpha-D-ribose 1-phosphate = D-ribose 5-phosphate. Its pathway is carbohydrate degradation; 2-deoxy-D-ribose 1-phosphate degradation; D-glyceraldehyde 3-phosphate and acetaldehyde from 2-deoxy-alpha-D-ribose 1-phosphate: step 1/2. In terms of biological role, isomerase that catalyzes the conversion of deoxy-ribose 1-phosphate (dRib-1-P) and ribose 1-phosphate (Rib-1-P) to deoxy-ribose 5-phosphate (dRib-5-P) and ribose 5-phosphate (Rib-5-P), respectively. In Psychromonas ingrahamii (strain DSM 17664 / CCUG 51855 / 37), this protein is Phosphopentomutase.